Here is a 159-residue protein sequence, read N- to C-terminus: Phosphopantetheine adenylyltransferase (159 aa).

Ser-8 is a substrate binding site. Residues Ser-8–Phe-9 and His-16 each bind ATP. Residues Lys-40, Thr-72, and Arg-86 each coordinate substrate. Residues Gly-87 to Arg-89, Glu-97, and Tyr-122 to Ser-128 each bind ATP.

The protein belongs to the bacterial CoaD family. In terms of assembly, homohexamer. Requires Mg(2+) as cofactor.

Its subcellular location is the cytoplasm. The enzyme catalyses (R)-4'-phosphopantetheine + ATP + H(+) = 3'-dephospho-CoA + diphosphate. It functions in the pathway cofactor biosynthesis; coenzyme A biosynthesis; CoA from (R)-pantothenate: step 4/5. In terms of biological role, reversibly transfers an adenylyl group from ATP to 4'-phosphopantetheine, yielding dephospho-CoA (dPCoA) and pyrophosphate. This Synechocystis sp. (strain ATCC 27184 / PCC 6803 / Kazusa) protein is Phosphopantetheine adenylyltransferase.